Reading from the N-terminus, the 93-residue chain is Small ribosomal subunit protein bS20 (93 aa).

The segment covering 1–11 (MPQHKSAEKRV) has biased composition (basic and acidic residues). The disordered stretch occupies residues 1 to 23 (MPQHKSAEKRVRQSKRRNARNRV). A compositionally biased stretch (basic residues) spans 12-23 (RQSKRRNARNRV).

The protein belongs to the bacterial ribosomal protein bS20 family.

Binds directly to 16S ribosomal RNA. This chain is Small ribosomal subunit protein bS20, found in Chloroherpeton thalassium (strain ATCC 35110 / GB-78).